A 636-amino-acid polypeptide reads, in one-letter code: Rust resistance kinase Lr10 (636 aa).

An N-terminal signal peptide occupies residues 1-24 (MSKLLVIALLLLPLINHGIYLATA). The Extracellular segment spans residues 25–276 (WDDQDFFKYC…MPDPHGSHIK (252 aa)). N-linked (GlcNAc...) asparagine glycans are attached at residues asparagine 56, asparagine 177, and asparagine 222. The chain crosses the membrane as a helical span at residues 277 to 297 (VIAATSSVAAFVALLLTVATV). At 298-636 (LYLSLKTRYN…FVSSENELMS (339 aa)) the chain is on the cytoplasmic side. The region spanning 339 to 628 (RRFKEKVGQG…SLQMPPKPFV (290 aa)) is the Protein kinase domain. Residues 345–353 (VGQGGFGSV) and lysine 367 contribute to the ATP site. Aspartate 466 functions as the Proton acceptor in the catalytic mechanism.

It belongs to the protein kinase superfamily. Ser/Thr protein kinase family. As to expression, specifically expressed in the aerial parts of the plant.

Its subcellular location is the cell membrane. It carries out the reaction L-seryl-[protein] + ATP = O-phospho-L-seryl-[protein] + ADP + H(+). The enzyme catalyses L-threonyl-[protein] + ATP = O-phospho-L-threonyl-[protein] + ADP + H(+). This chain is Rust resistance kinase Lr10, found in Triticum aestivum (Wheat).